Consider the following 450-residue polypeptide: Bicarbonate-binding protein CmpA (450 aa).

The tat-type signal signal peptide spans 1–36 (MNEFQPVNRRQFLFTLGATAASAILLKGCGNPPSSS).

This sequence belongs to the CmpA/NrtA family. In terms of assembly, the complex is composed of two ATP-binding proteins (CmpC and CmpD), a transmembrane protein (CmpB) and a solute-binding protein (CmpA). Post-translationally, predicted to be exported by the Tat system. The position of the signal peptide cleavage has not been experimentally proven. In terms of processing, the N-terminus is blocked.

It is found in the cell inner membrane. Part of the ABC transporter complex CmpABCD involved in bicarbonate transport. Binds bicarbonate with high affinity. The chain is Bicarbonate-binding protein CmpA (cmpA) from Synechococcus elongatus (strain ATCC 33912 / PCC 7942 / FACHB-805) (Anacystis nidulans R2).